The primary structure comprises 258 residues: 5'-nucleotidase SurE (258 aa).

The a divalent metal cation site is built by aspartate 14, aspartate 15, serine 45, and asparagine 101.

It belongs to the SurE nucleotidase family. It depends on a divalent metal cation as a cofactor.

It localises to the cytoplasm. It carries out the reaction a ribonucleoside 5'-phosphate + H2O = a ribonucleoside + phosphate. Functionally, nucleotidase that shows phosphatase activity on nucleoside 5'-monophosphates. In Chlorobium limicola (strain DSM 245 / NBRC 103803 / 6330), this protein is 5'-nucleotidase SurE.